Here is a 374-residue protein sequence, read N- to C-terminus: 4-hydroxy-3-methylbut-2-en-1-yl diphosphate synthase (flavodoxin) (374 aa).

Residues cysteine 270, cysteine 273, cysteine 305, and glutamate 312 each contribute to the [4Fe-4S] cluster site.

The protein belongs to the IspG family. The cofactor is [4Fe-4S] cluster.

It catalyses the reaction (2E)-4-hydroxy-3-methylbut-2-enyl diphosphate + oxidized [flavodoxin] + H2O + 2 H(+) = 2-C-methyl-D-erythritol 2,4-cyclic diphosphate + reduced [flavodoxin]. It functions in the pathway isoprenoid biosynthesis; isopentenyl diphosphate biosynthesis via DXP pathway; isopentenyl diphosphate from 1-deoxy-D-xylulose 5-phosphate: step 5/6. Its function is as follows. Converts 2C-methyl-D-erythritol 2,4-cyclodiphosphate (ME-2,4cPP) into 1-hydroxy-2-methyl-2-(E)-butenyl 4-diphosphate. The sequence is that of 4-hydroxy-3-methylbut-2-en-1-yl diphosphate synthase (flavodoxin) from Yersinia enterocolitica serotype O:8 / biotype 1B (strain NCTC 13174 / 8081).